The following is a 296-amino-acid chain: 4-hydroxy-tetrahydrodipicolinate synthase (296 aa).

Thr49 contacts pyruvate. Residue Tyr137 is the Proton donor/acceptor of the active site. Lys165 serves as the catalytic Schiff-base intermediate with substrate. Position 207 (Val207) interacts with pyruvate.

The protein belongs to the DapA family. In terms of assembly, homotetramer; dimer of dimers.

Its subcellular location is the cytoplasm. It carries out the reaction L-aspartate 4-semialdehyde + pyruvate = (2S,4S)-4-hydroxy-2,3,4,5-tetrahydrodipicolinate + H2O + H(+). Its pathway is amino-acid biosynthesis; L-lysine biosynthesis via DAP pathway; (S)-tetrahydrodipicolinate from L-aspartate: step 3/4. Functionally, catalyzes the condensation of (S)-aspartate-beta-semialdehyde [(S)-ASA] and pyruvate to 4-hydroxy-tetrahydrodipicolinate (HTPA). This is 4-hydroxy-tetrahydrodipicolinate synthase from Nitrobacter hamburgensis (strain DSM 10229 / NCIMB 13809 / X14).